Here is a 562-residue protein sequence, read N- to C-terminus: MDPQPPPPAQGSPPHRGRGRGRGRGRGRGRGRGRGGAGAPRAPLPCPTCGRLFRFPYYLSRHRLSHSGLRPHACPLCPKAFRRPAHLSRHLRGHGPQPPLRCAACPRTFPEPAQLRRHLAQEHAGGEVELAIERVAKETAEPSWGPQDEGSEPPTTAAAGATEEEAVAAWPETWPAGEPSTLAAPTSAAEPRESESEEAEAGAAELRAELALAAGRQEEKQVLLQADWTLLCLRCREAFATKGELKAHPCLRPEGEQEGEGGPPPRPKRHQCSICLKAFARPWSLSRHRLVHSTDRPFVCPDCGLAFRLASYLRQHRRVHGPLSLLAPLPAAGKKDDKASGARNSAKGPEGGEGAECGGASEGGEGQNGGDAAPARPPAGEPRFWCPECGKGFRRRAHLRQHGVTHSGARPFQCVRCQREFKRLADLARHAQVHAGGPAPHPCPRCPRRFSRAYSLLRHQRCHRAELERAAALQALQAQAPTSPPPPPPPLKAEQEEEGLPLPLANIKEEPPSPGTPPQSPPAPPVFLSASCFDSQDHSAFEMEEEEVDSKAHLRGLGGLAS.

A compositionally biased stretch (pro residues) spans 1-11 (MDPQPPPPAQG). The disordered stretch occupies residues 1-43 (MDPQPPPPAQGSPPHRGRGRGRGRGRGRGRGRGRGGAGAPRAP). Basic residues predominate over residues 15 to 33 (HRGRGRGRGRGRGRGRGRG). 3 consecutive C2H2-type zinc fingers follow at residues 44-66 (LPCPTCGRLFRFPYYLSRHRLSH), 72-94 (HACPLCPKAFRRPAHLSRHLRGH), and 100-123 (LRCAACPRTFPEPAQLRRHLAQEH). Arg92 bears the Omega-N-methylarginine mark. A disordered region spans residues 139–203 (TAEPSWGPQD…SESEEAEAGA (65 aa)). Ser194 and Ser196 each carry phosphoserine. C2H2-type zinc fingers lie at residues 270–292 (HQCSICLKAFARPWSLSRHRLVH) and 298–320 (FVCPDCGLAFRLASYLRQHRRVH). A disordered region spans residues 327–379 (APLPAAGKKDDKASGARNSAKGPEGGEGAECGGASEGGEGQNGGDAAPARPPA). Residues 349–369 (PEGGEGAECGGASEGGEGQNG) are compositionally biased toward gly residues. 3 consecutive C2H2-type zinc fingers follow at residues 384–406 (FWCPECGKGFRRRAHLRQHGVTH), 412–434 (FQCVRCQREFKRLADLARHAQVH), and 441–463 (HPCPRCPRRFSRAYSLLRHQRCH). The tract at residues 477–562 (QAQAPTSPPP…HLRGLGGLAS (86 aa)) is disordered. 2 stretches are compositionally biased toward pro residues: residues 482–491 (TSPPPPPPPL) and 512–525 (PSPGTPPQSPPAPP). At Ser483 the chain carries Phosphoserine.

Belongs to the krueppel C2H2-type zinc-finger protein family.

The protein localises to the nucleus. In terms of biological role, may be involved in transcriptional regulation. This is Zinc finger protein 579 (ZNF579) from Homo sapiens (Human).